The chain runs to 376 residues: Putative F-box only protein 9 (376 aa).

The F-box domain occupies 1 to 44 (MSDLPPDLVEDILSRVPATSLKRLRFTCKQWNSLFKNRRFTEKH).

The chain is Putative F-box only protein 9 (FBX9) from Arabidopsis thaliana (Mouse-ear cress).